The primary structure comprises 145 residues: UPF0260 protein VV2402 (145 aa).

The protein belongs to the UPF0260 family.

The protein is UPF0260 protein VV2402 of Vibrio vulnificus (strain YJ016).